A 207-amino-acid polypeptide reads, in one-letter code: Thiamine-phosphate synthase (207 aa).

4-amino-2-methyl-5-(diphosphooxymethyl)pyrimidine contacts are provided by residues 41–45 and Asn-73; that span reads QLRLK. The Mg(2+) site is built by Asp-74 and Asp-93. Thr-111 is a 4-amino-2-methyl-5-(diphosphooxymethyl)pyrimidine binding site. 138–140 is a 2-[(2R,5Z)-2-carboxy-4-methylthiazol-5(2H)-ylidene]ethyl phosphate binding site; it reads TKT. Lys-141 lines the 4-amino-2-methyl-5-(diphosphooxymethyl)pyrimidine pocket. Gly-168 contributes to the 2-[(2R,5Z)-2-carboxy-4-methylthiazol-5(2H)-ylidene]ethyl phosphate binding site.

It belongs to the thiamine-phosphate synthase family. Mg(2+) is required as a cofactor.

The catalysed reaction is 2-[(2R,5Z)-2-carboxy-4-methylthiazol-5(2H)-ylidene]ethyl phosphate + 4-amino-2-methyl-5-(diphosphooxymethyl)pyrimidine + 2 H(+) = thiamine phosphate + CO2 + diphosphate. It catalyses the reaction 2-(2-carboxy-4-methylthiazol-5-yl)ethyl phosphate + 4-amino-2-methyl-5-(diphosphooxymethyl)pyrimidine + 2 H(+) = thiamine phosphate + CO2 + diphosphate. The enzyme catalyses 4-methyl-5-(2-phosphooxyethyl)-thiazole + 4-amino-2-methyl-5-(diphosphooxymethyl)pyrimidine + H(+) = thiamine phosphate + diphosphate. The protein operates within cofactor biosynthesis; thiamine diphosphate biosynthesis; thiamine phosphate from 4-amino-2-methyl-5-diphosphomethylpyrimidine and 4-methyl-5-(2-phosphoethyl)-thiazole: step 1/1. Functionally, condenses 4-methyl-5-(beta-hydroxyethyl)thiazole monophosphate (THZ-P) and 2-methyl-4-amino-5-hydroxymethyl pyrimidine pyrophosphate (HMP-PP) to form thiamine monophosphate (TMP). The chain is Thiamine-phosphate synthase from Pelagibacter ubique (strain HTCC1062).